The sequence spans 672 residues: DNA polymerase eta (672 aa).

Positions 14 to 254 (IAHVDMDCFY…LPIKKMKQLG (241 aa)) constitute a UmuC domain. The Mg(2+) site is built by Asp18 and Met19. The Mn(2+) site is built by Asp18 and Met19. A 2'-deoxyribonucleoside 5'-triphosphate-binding residues include Tyr23 and Arg60. Residues Asp120 and Glu121 each coordinate Mg(2+). 2 residues coordinate Mn(2+): Asp120 and Glu121. Glu121 acts as the Proton acceptor in catalysis. DNA-binding regions lie at residues 318 to 325 (KTFPGPRA) and 362 to 383 (TLHASAFRSKDSDSHKKFPSKS). 2 disordered regions span residues 521–617 (VSCP…TDWG) and 648–672 (QFNTGKSKGDGSTSSIAHYFPPLNR). 2 stretches are compositionally biased toward polar residues: residues 523 to 544 (CPSNEATDVSTQSESNKGTQTK) and 570 to 586 (YNATPPSKQETQEDSTV). Composition is skewed to low complexity over residues 587–602 (SSASKRAKLSSSSHNS) and 651–662 (TGKSKGDGSTSS).

It belongs to the DNA polymerase type-Y family. Interacts with PCNA1 and PCNA2. The interaction with PCNA2 is required for translesion synthesis (TLS) to repair UV photoproducts. Mg(2+) serves as cofactor. Requires Mn(2+) as cofactor. Constitutively expressed in roots, stems, leaves, flowers and siliques.

It localises to the nucleus. It catalyses the reaction DNA(n) + a 2'-deoxyribonucleoside 5'-triphosphate = DNA(n+1) + diphosphate. The enzyme in complex with the DNA substrate binds a third divalent metal cation. The binding of this third divalent cation, which is coordinated by water molecules and two oxygen atoms from DNA and dNTP, is essential for catalyzing the DNA synthesis. Error-free DNA polymerase specifically involved in DNA repair. Plays an important role in translesion synthesis (TLS), where the normal high fidelity DNA polymerases cannot proceed and DNA synthesis stalls. Plays an important role in the repair of UV-induced pyrimidine dimers and confers resistance to ultraviolet light. Depending on the context, it inserts the correct base, but may cause base transitions and transversions. Forms a Schiff base with 5'-deoxyribose phosphate at abasic sites, but does not have lyase activity. Targets POLI to replication foci. Exhibits cyclobutane dimer nonmutagenic bypass activity in vitro. The polypeptide is DNA polymerase eta (POLH) (Arabidopsis thaliana (Mouse-ear cress)).